Here is a 1384-residue protein sequence, read N- to C-terminus: DNA-directed RNA polymerase subunit beta (1384 aa).

Belongs to the RNA polymerase beta chain family. In terms of assembly, the RNAP catalytic core consists of 2 alpha, 1 beta, 1 beta' and 1 omega subunit. When a sigma factor is associated with the core the holoenzyme is formed, which can initiate transcription.

The catalysed reaction is RNA(n) + a ribonucleoside 5'-triphosphate = RNA(n+1) + diphosphate. Its function is as follows. DNA-dependent RNA polymerase catalyzes the transcription of DNA into RNA using the four ribonucleoside triphosphates as substrates. In Stenotrophomonas maltophilia (strain R551-3), this protein is DNA-directed RNA polymerase subunit beta.